We begin with the raw amino-acid sequence, 2624 residues long: Transcription factor TFIIIB component B'' homolog (2624 aa).

The tract at residues 1–142 (MFRRARLSVK…TKEKQPCSDR (142 aa)) is disordered. Positions 1-299 (MFRRARLSVK…TYSSFRKNYY (299 aa)) are interaction with ZBTB43. Residues 63 to 77 (PQEKAPRSSTEKTGG) show a composition bias toward basic and acidic residues. The segment covering 99–119 (SSTSSLVKSSVSVPSESHPLS) has biased composition (low complexity). The span at 120-132 (TINQEAPQPTATS) shows a compositional bias: polar residues. The segment covering 133–142 (TKEKQPCSDR) has biased composition (basic and acidic residues). Residues 144–177 (RIYKAQKLREMLKEELRKEKKQWKNKYAINESQR) are a coiled coil. The disordered stretch occupies residues 193-241 (LPDNNPMTSSLEQEKKTEKPSTPVQTREQEGKSTPNAEDNEMEEETDDG). The span at 212–229 (PSTPVQTREQEGKSTPNA) shows a compositional bias: polar residues. The span at 230 to 240 (EDNEMEEETDD) shows a compositional bias: acidic residues. The region spanning 295–345 (RKNYYSKPWSNKETDMFFLAISMVGTDFSMIGQLFPHRARIEIKNKFKREE) is the Myb-like domain. The required for phosphorylation by CSNK2A1 stretch occupies residues 355-470 (AFQEKRPFDF…QKKRRRKKQD (116 aa)). Disordered regions lie at residues 379–449 (EKRK…SRED), 544–567 (LSLSNQQDATSVATESSESSTSDL), 606–663 (ENVK…MNTL), and 729–759 (EEIGANVEKNENESCADRDTPQHMEDQSRKD). Over residues 397-407 (TKPRKNVKVKK) the composition is skewed to basic residues. Positions 552–565 (ATSVATESSESSTS) are enriched in low complexity. Basic and acidic residues-rich tracts occupy residues 637-663 (TESESKNSHSKTSVEKNHVEKDKMNTL) and 736-759 (EKNENESCADRDTPQHMEDQSRKD). A 1; approximate repeat occupies 823–877 (GRREISSKEEVLEKILVSGEMAAALRETVRLDTSPKEMVPAEINTKEMQSDLKET). Positions 823 to 1327 (GRREISSKEE…PRENELEETS (505 aa)) are 9 X 55 AA repeats of G-R-R-X-I-S-P-X-E-N-G-X-E-E-V-K-P-X-X-E-M-E-T-D-L-K-X-T-G-R-E-X-X-X-R-E-K-T-X-E-X-X-D-A-X-E-E-I-D-X-D-L-E-E-T. A run of 6 repeats spans residues 878–932 (GRRA…LEEA), 933–987 (GRRE…LEET), 988–1040 (GRRK…LEET), 1041–1094 (EREV…LEET), 1095–1148 (EREI…LEET), and 1149–1203 (GRRE…LEET). Thr-915 bears the Phosphothreonine mark. 2 stretches are compositionally biased toward basic and acidic residues: residues 930-957 (EEAGRREISPQKNGPEEVKPLGEVETDL) and 979-1006 (EIDKNLEETGRRKISPRENGPEEVKPVD). A disordered region spans residues 930–1222 (EEAGRREISP…GPEEVKPVGK (293 aa)). Positions 1030-1041 (DATEEIDLEETE) are enriched in acidic residues. The segment covering 1052-1079 (EEVKPLGEMETDLKATGRDSFPRGKTPE) has biased composition (basic and acidic residues). Residues 1078 to 1103 (PEVIDAIEEIEIDLEETEREISPQEN) are a coiled coil. Positions 1082 to 1095 (DAIEEIEIDLEETE) are enriched in acidic residues. The span at 1120–1133 (ATGREISPREKTPE) shows a compositional bias: basic and acidic residues. Over residues 1136 to 1145 (DATEEIDKDL) the composition is skewed to acidic residues. The span at 1161 to 1190 (EEVKPVDEMETDLKTTGREGSSREKTREVI) shows a compositional bias: basic and acidic residues. The segment covering 1194 to 1204 (EVIETDLEETE) has biased composition (acidic residues). One copy of the 8; approximate repeat lies at 1204-1257 (EREISPQENGPEEVKPVGKMETDLKEIREEISQREKVLAEFSAIREKEIDLKET). Residues 1223–1284 (METDLKEIRE…VEEMEADLKE (62 aa)) are a coiled coil. The 9; approximate repeat unit spans residues 1258–1327 (GKRDIPIMEK…PRENELEETS (70 aa)). Residues 1306–1321 (AELKQTGKTDISPREN) show a composition bias toward basic and acidic residues. Disordered stretches follow at residues 1306–1348 (AELK…SAVP), 1365–1440 (TPVE…RFKR), 1519–1543 (TERNLSPSNSCEPKEESQSAPVQKN), 1684–1722 (KAKPNLGRAHSKKEEPVLEKVTTDQSKEGKPEDHLLQKG), 1819–1863 (STSE…ASKA), 2130–2164 (GAEMETQRETEKNASKATELENKNLGPVTTAENKD), 2181–2200 (SEVNLTERNENQEESSQEVH), 2207–2241 (VASSETGPCTLGLDRGLGENSVEEPQIKDSKGDSV), 2444–2501 (FQSR…SRPG), and 2519–2566 (SDEP…PSPS). The segment covering 1326–1344 (TSTSRQTDTHLMQSGSNDF) has biased composition (polar residues). A compositionally biased stretch (basic and acidic residues) spans 1366-1378 (PVEEKRNSEKEVS). 3 stretches are compositionally biased toward polar residues: residues 1379 to 1390 (SHFSHFKISSQT), 1411 to 1421 (SDINLSKSLPQ), and 1519 to 1529 (TERNLSPSNSC). Residues 1695–1719 (KKEEPVLEKVTTDQSKEGKPEDHLL) show a composition bias toward basic and acidic residues. The span at 1844–1853 (RGSKRVRGKT) shows a compositional bias: basic residues. Residues 2131-2151 (AEMETQRETEKNASKATELEN) are compositionally biased toward basic and acidic residues. A compositionally biased stretch (basic and acidic residues) spans 2470 to 2479 (VSDKEERTDA). The span at 2488-2498 (SRTSSSKASLS) shows a compositional bias: low complexity. A compositionally biased stretch (basic residues) spans 2526–2544 (HSKKRLKPLIPGLRKKLKR).

In terms of assembly, component of TFIIIB complex. The TFIIIB complex has two activities, alpha and beta. The TFIIIB-alpha and TFIIIB-beta activities are required for transcription of genes with TFIIIC-bound internal promoters and PSE transcription factor-bound external promoters, respectively. The TFIIIB-alpha activity complex is composed of TBP, BDP1, and a complex containing both BRF2 and at least four stably associated proteins; YY1 facilitates the formation of TFIIIB-alpha activity complex. The TFIIIB-beta activity complex is composed of TBP, BDP1, and BRF1. Interacts with BRF1; this interaction diminishes during mitosis resulting in the release of BDP1 from chromosomal templates. Component of TFIIIC complex. The TFIIIC complex has two activities, C1 and C2. The TFIIIC2 activity complex is only required for transcription of the 'classical' pol III genes whereas the TFIIIC1 activity complex is required for transcription of all pol III genes. The TFIIIC1 activity complex is composed at least of BDP1. Interacts with ZBTB43. Phosphorylated by CSNK2A1 during mitosis, resulting in its release from chromatin and suppression of polymerase III transcription. Isoform 2 is highly expressed in cerebellum.

It localises to the nucleus. General activator of RNA polymerase III transcription. Requires for transcription from all three types of polymerase III promoters. Requires for transcription of genes with internal promoter elements and with promoter elements upstream of the initiation site. The chain is Transcription factor TFIIIB component B'' homolog (BDP1) from Homo sapiens (Human).